Reading from the N-terminus, the 251-residue chain is Triosephosphate isomerase (251 aa).

9-11 contributes to the substrate binding site; the sequence is NWK. The active-site Electrophile is histidine 95. Catalysis depends on glutamate 167, which acts as the Proton acceptor. Substrate is bound by residues glycine 173, serine 213, and 234-235; that span reads GG.

Belongs to the triosephosphate isomerase family. In terms of assembly, homodimer.

The protein localises to the cytoplasm. It catalyses the reaction D-glyceraldehyde 3-phosphate = dihydroxyacetone phosphate. It participates in carbohydrate biosynthesis; gluconeogenesis. Its pathway is carbohydrate degradation; glycolysis; D-glyceraldehyde 3-phosphate from glycerone phosphate: step 1/1. In terms of biological role, involved in the gluconeogenesis. Catalyzes stereospecifically the conversion of dihydroxyacetone phosphate (DHAP) to D-glyceraldehyde-3-phosphate (G3P). This Pediococcus pentosaceus (strain ATCC 25745 / CCUG 21536 / LMG 10740 / 183-1w) protein is Triosephosphate isomerase.